The following is a 670-amino-acid chain: Transcription factor Ken 2 (670 aa).

Residues Thr-108–Ser-176 enclose the BTB domain. 2 disordered regions span residues Ser-200 to Arg-288 and Asn-307 to Ala-470. Positions Asn-218–Val-230 are enriched in polar residues. Residues His-325 to Leu-338 show a composition bias toward basic residues. Gly residues-rich tracts occupy residues Gly-351–Gly-368 and Ser-389–Ser-400. Residues Glu-407–Val-419 are compositionally biased toward acidic residues. A compositionally biased stretch (polar residues) spans Ser-451–Asp-464. The C2H2-type 1; degenerate zinc finger occupies Asn-586–His-594. C2H2-type zinc fingers lie at residues Phe-600–His-623 and Tyr-636–His-658.

It is found in the nucleus. Functionally, transcription factor required for terminalia development. Negative regulator of the JAK/STAT pathway: represses JAK/STAT-dependent expression of ventral veins lacking (vvl) in the posterior spiracles. The chain is Transcription factor Ken 2 from Culex quinquefasciatus (Southern house mosquito).